Here is a 3619-residue protein sequence, read N- to C-terminus: BEACH domain-containing protein lvsA (3619 aa).

Disordered regions lie at residues 1–117 (MFRR…NNNN), 648–709 (KIDD…EKEA), 1101–1129 (NNNN…NNDQ), 1367–1390 (SPNL…NSKK), 1636–1658 (IPTP…RKSI), 1893–1924 (SSIS…PTSG), and 1964–1999 (QQAA…NTPN). Over residues 17-30 (PQVPHSPGHPPHQP) the composition is skewed to pro residues. 8 stretches are compositionally biased toward low complexity: residues 31 to 59 (PQQQ…QQPQ), 68 to 87 (SVSS…SFSS), 97 to 117 (EESS…NNNN), 656 to 689 (NNNN…NEEN), 1101 to 1127 (NNNN…NNNN), 1375 to 1387 (NNNN…GGSN), 1640 to 1652 (SSSS…SSTS), and 1893 to 1923 (SSIS…TPTS). One copy of the WD 1 repeat lies at 94 to 133 (SATEESSSINSNNNNNNNKNNNNNNNSNIIESNINVWTIM). Polar residues predominate over residues 1974 to 1986 (MSIQSSPFQSKNL). A coiled-coil region spans residues 2234–2258 (VKILEKLEADRVGLQKTVQSLYKSL). The WD 2 repeat unit spans residues 2294-2335 (LDSDFMNAFCYPLYKLVISDQHEHVDNSIKLWRLLLSLKTSS). 2 disordered regions span residues 2403–2457 (KKQH…ITKK) and 2596–2785 (NTSS…SEDE). The span at 2440–2452 (DRKDQSHQEEKSK) shows a compositional bias: basic and acidic residues. Low complexity predominate over residues 2596–2662 (NTSSITNNNN…TTTPQQSSSQ (67 aa)). 2 stretches are compositionally biased toward polar residues: residues 2663–2687 (IKVS…SSSE) and 2694–2725 (KLQS…SEEN). 2 stretches are compositionally biased toward low complexity: residues 2726–2735 (SSLTSASTTL) and 2742–2764 (TQTT…TTTT). Positions 2807 to 2932 (KDPRLNGIMY…TRDEVYHTLV (126 aa)) constitute a BEACH-type PH domain. Positions 2940–2971 (TIGGDAQGITGGQTGNDDNDDHHGGGGGRGVR) are disordered. A compositionally biased stretch (gly residues) spans 2944-2953 (DAQGITGGQT). Residues 2959–2971 (DDHHGGGGGRGVR) show a composition bias toward basic and acidic residues. One can recognise a BEACH domain in the interval 2972–3270 (DRFTSIWRKS…QLFDKPHPKR (299 aa)). 5 WD repeats span residues 3347–3386 (HHDG…LAKR), 3389–3428 (GHTG…YVRS), 3431–3471 (AHEG…NYKT), 3474–3518 (IAND…LPDN), and 3563–3602 (SHST…QVKQ). Positions 3516 to 3539 (PDNNNSNNNNNNNNNNNNNATQIP) are disordered. Positions 3518-3534 (NNNSNNNNNNNNNNNNN) are enriched in low complexity.

The protein localises to the contractile vacuole membrane. In terms of biological role, involved in myosin-independent cytokinesis and early steps of phagocytosis. Also involved in contractile vacuole-mediated osmoregulation. The sequence is that of BEACH domain-containing protein lvsA (lvsA) from Dictyostelium discoideum (Social amoeba).